The primary structure comprises 533 residues: Glucose-6-phosphate isomerase (533 aa).

The Proton donor role is filled by Glu341. Active-site residues include His372 and Lys501.

It belongs to the GPI family.

The protein localises to the cytoplasm. It catalyses the reaction alpha-D-glucose 6-phosphate = beta-D-fructose 6-phosphate. It participates in carbohydrate biosynthesis; gluconeogenesis. It functions in the pathway carbohydrate degradation; glycolysis; D-glyceraldehyde 3-phosphate and glycerone phosphate from D-glucose: step 2/4. Catalyzes the reversible isomerization of glucose-6-phosphate to fructose-6-phosphate. In Cereibacter sphaeroides (strain ATCC 17025 / ATH 2.4.3) (Rhodobacter sphaeroides), this protein is Glucose-6-phosphate isomerase.